The primary structure comprises 344 residues: GTP 3',8-cyclase (344 aa).

Residues Pro19–Ala245 form the Radical SAM core domain. Arg28 is a binding site for GTP. The [4Fe-4S] cluster site is built by Cys35 and Cys39. S-adenosyl-L-methionine is bound at residue Tyr41. Cys42 serves as a coordination point for [4Fe-4S] cluster. Arg77 is a binding site for GTP. Position 81 (Gly81) interacts with S-adenosyl-L-methionine. Thr111 is a binding site for GTP. Ser135 is an S-adenosyl-L-methionine binding site. Lys171 contacts GTP. Met205 contacts S-adenosyl-L-methionine. Positions 268 and 271 each coordinate [4Fe-4S] cluster. A GTP-binding site is contributed by Arg273–Arg275. Cys285 contacts [4Fe-4S] cluster.

Belongs to the radical SAM superfamily. MoaA family. As to quaternary structure, monomer and homodimer. Requires [4Fe-4S] cluster as cofactor.

The catalysed reaction is GTP + AH2 + S-adenosyl-L-methionine = (8S)-3',8-cyclo-7,8-dihydroguanosine 5'-triphosphate + 5'-deoxyadenosine + L-methionine + A + H(+). It functions in the pathway cofactor biosynthesis; molybdopterin biosynthesis. Functionally, catalyzes the cyclization of GTP to (8S)-3',8-cyclo-7,8-dihydroguanosine 5'-triphosphate. This is GTP 3',8-cyclase from Brucella canis (strain ATCC 23365 / NCTC 10854 / RM-666).